Here is a 414-residue protein sequence, read N- to C-terminus: Serine hydroxymethyltransferase (414 aa).

Residues L121 and 125-127 (GHL) contribute to the (6S)-5,6,7,8-tetrahydrofolate site. The residue at position 229 (K229) is an N6-(pyridoxal phosphate)lysine.

This sequence belongs to the SHMT family. As to quaternary structure, homodimer. The cofactor is pyridoxal 5'-phosphate.

It localises to the cytoplasm. It carries out the reaction (6R)-5,10-methylene-5,6,7,8-tetrahydrofolate + glycine + H2O = (6S)-5,6,7,8-tetrahydrofolate + L-serine. It participates in one-carbon metabolism; tetrahydrofolate interconversion. It functions in the pathway amino-acid biosynthesis; glycine biosynthesis; glycine from L-serine: step 1/1. In terms of biological role, catalyzes the reversible interconversion of serine and glycine with tetrahydrofolate (THF) serving as the one-carbon carrier. This reaction serves as the major source of one-carbon groups required for the biosynthesis of purines, thymidylate, methionine, and other important biomolecules. Also exhibits THF-independent aldolase activity toward beta-hydroxyamino acids, producing glycine and aldehydes, via a retro-aldol mechanism. The polypeptide is Serine hydroxymethyltransferase (Polaromonas sp. (strain JS666 / ATCC BAA-500)).